Consider the following 135-residue polypeptide: Evasin P1134 (135 aa).

A signal peptide spans 1–31 (MEVKTFAFLQIAVFIALGIQIFAAVTAAADA). Intrachain disulfides connect C41–C63, C45–C65, and C56–C76. N-linked (GlcNAc...) asparagine glycosylation is present at N44. The tract at residues 88 to 112 (ETPSNSDLEAATPRPRKTLYPVRNP) is disordered.

Its subcellular location is the secreted. Salivary chemokine-binding protein which binds to host chemokine CXCL1. This chain is Evasin P1134, found in Ixodes ricinus (Common tick).